The sequence spans 540 residues: Glucose-6-phosphate isomerase (540 aa).

E350 serves as the catalytic Proton donor. Residues H381 and K503 contribute to the active site.

It belongs to the GPI family.

It localises to the cytoplasm. It carries out the reaction alpha-D-glucose 6-phosphate = beta-D-fructose 6-phosphate. It functions in the pathway carbohydrate biosynthesis; gluconeogenesis. Its pathway is carbohydrate degradation; glycolysis; D-glyceraldehyde 3-phosphate and glycerone phosphate from D-glucose: step 2/4. Its function is as follows. Catalyzes the reversible isomerization of glucose-6-phosphate to fructose-6-phosphate. The sequence is that of Glucose-6-phosphate isomerase from Burkholderia orbicola (strain MC0-3).